A 309-amino-acid chain; its full sequence is Putative glycosyltransferase 48 (309 aa).

Belongs to the glycosyltransferase group 1 family. Glycosyltransferase 4 subfamily.

The polypeptide is Putative glycosyltransferase 48 (SIFV0048) (Saccharolobus islandicus (Sulfolobus islandicus)).